A 304-amino-acid polypeptide reads, in one-letter code: Insulin-like growth factor-binding protein 2 (304 aa).

Residues 1–34 (MLPRLGGPALPLLLPSLLLLLLLGAGGCGPGVRA) form the signal peptide. Positions 36–118 (VLFRCPPCTP…VTGAGTCEKR (83 aa)) constitute an IGFBP N-terminal domain. 9 disulfides stabilise this stretch: Cys-40/Cys-68, Cys-43/Cys-70, Cys-51/Cys-71, Cys-59/Cys-74, Cys-82/Cys-95, Cys-89/Cys-115, Cys-206/Cys-240, Cys-251/Cys-262, and Cys-264/Cys-285. A Thyroglobulin type-1 domain is found at 203–285 (RTPCQQELDQ…APTIRGDPEC (83 aa)). The short motif at 280–282 (RGD) is the Cell attachment site element.

Interacts with IGF1. Interacts with IGF2. Interacts (via RGD motif) with integrin alpha5/ITGA5; this interaction induces cell migration, adhesion or apoptosis according to the context. Interacts with PTPRB; this interaction leads to PTPRB dimerization and inactivation. Post-translationally, cleaved by MMP9 leading to release of free IGF2 from IGFBP2-IGF2 complex, which contributes to enhance the motility and the growth of astrocytes. In terms of processing, O-glycosylated. In adults, expressed in brain, testes, ovaries, and kidney. Expression in the adult liver is barely detectable.

The protein localises to the secreted. In terms of biological role, multifunctional protein that plays a critical role in regulating the availability of IGFs such as IGF1 and IGF2 to their receptors and thereby regulates IGF-mediated cellular processes including proliferation, differentiation, and apoptosis in a cell-type specific manner. Functions coordinately with receptor protein tyrosine phosphatase beta/PTPRB and the IGF1 receptor to regulate IGF1-mediated signaling by stimulating the phosphorylation of PTEN leading to its inactivation and AKT1 activation. Plays a positive role in cell migration via interaction with integrin alpha5/ITGA5 through an RGD motif. Additionally, interaction with ITGA5/ITGB1 enhances the adhesion of endothelial progenitor cells to endothelial cells. Upon mitochondrial damage, facilitates apoptosis with ITGA5 of podocytes, and then activates the phosphorylation of focal adhesion kinase (FAK)-mediated mitochondrial injury. The polypeptide is Insulin-like growth factor-binding protein 2 (Igfbp2) (Rattus norvegicus (Rat)).